The chain runs to 770 residues: Probable copper-exporting P-type ATPase V (770 aa).

The 66-residue stretch at 1-66 (MRVCVTGFNV…AITKAQHVPA (66 aa)) folds into the HMA domain. The interval 103–130 (DKPLKASRCGGRPRGPVRGSASWPGEQN) is disordered. A compositionally biased stretch (low complexity) spans 110–121 (RCGGRPRGPVRG). The next 6 membrane-spanning stretches (helical) occupy residues 141–161 (VWLA…FGAY), 164–184 (AGWL…WPIL), 193–213 (ALTS…FVYS), 217–237 (LFAG…FVVL), 377–397 (AVFV…WTLI), and 402–422 (VAGM…ALGL). The 4-aspartylphosphate intermediate role is filled by Asp-460. Positions 660 and 664 each coordinate Mg(2+). 2 consecutive transmembrane segments (helical) span residues 718 to 737 (LGWA…LGAL) and 741 to 760 (VAGA…SLRL).

This sequence belongs to the cation transport ATPase (P-type) (TC 3.A.3) family. Type IB subfamily.

It localises to the cell membrane. It catalyses the reaction Cu(+)(in) + ATP + H2O = Cu(+)(out) + ADP + phosphate + H(+). In terms of biological role, necessary for copper homeostasis and likely functions as a copper exporter. Also required for full virulence. This is Probable copper-exporting P-type ATPase V (ctpV) from Mycobacterium tuberculosis (strain CDC 1551 / Oshkosh).